We begin with the raw amino-acid sequence, 315 residues long: Alpha- and gamma-adaptin-binding protein p34 (315 aa).

Residues 197–234 (IGSADPCHPEQPHLPAADSTESLSDHRGGASNTTDAQV) form a disordered region. Residues serine 310 and serine 311 each carry the phosphoserine modification.

As to quaternary structure, associated with AP-1 and AP-2 complexes. In terms of tissue distribution, widely expressed, including in skin and keratinocytes, with highest levels in adrenal gland, rectum and thymus.

The protein resides in the cytoplasm. Its subcellular location is the cytosol. Functionally, may be involved in endocytic recycling of growth factor receptors such as EGFR. This Homo sapiens (Human) protein is Alpha- and gamma-adaptin-binding protein p34 (AAGAB).